Here is a 242-residue protein sequence, read N- to C-terminus: Uridylate kinase (242 aa).

Residues 15-18, G58, and R62 each bind ATP; that span reads KISG. Residues D77 and 139 to 146 contribute to the UMP site; that span reads TGNPFFTT. Residues T166, Y172, and D175 each contribute to the ATP site.

It belongs to the UMP kinase family. Homohexamer.

It is found in the cytoplasm. It catalyses the reaction UMP + ATP = UDP + ADP. The protein operates within pyrimidine metabolism; CTP biosynthesis via de novo pathway; UDP from UMP (UMPK route): step 1/1. Inhibited by UTP. Its function is as follows. Catalyzes the reversible phosphorylation of UMP to UDP. The chain is Uridylate kinase from Buchnera aphidicola subsp. Acyrthosiphon pisum (strain APS) (Acyrthosiphon pisum symbiotic bacterium).